Consider the following 77-residue polypeptide: Apelin (77 aa).

The signal sequence occupies residues 1–22 (MNLRLCVQALLLLWLSLTAVCG). Residues 23–41 (GSLMPLPDGNGLEDGNVRH) constitute a propeptide that is removed on maturation. The interval 43-77 (VQPRGSRNGPGPWQGGRRKFRRQRPRLSHKGPMPF) is disordered. Positions 58–71 (GRRKFRRQRPRLSH) are enriched in basic residues.

The protein belongs to the apelin family. Several active peptides may be produced by proteolytic processing of the peptide precursor. As to expression, expressed in the brain with highest levels in the frontal cortex, thalamus, hypothalamus and midbrain. Secreted by the mammary gland into the colostrum and the milk.

Its subcellular location is the secreted. The protein resides in the extracellular space. Its function is as follows. Peptide hormone that functions as endogenous ligand for the G-protein-coupled apelin receptor (APLNR/APJ), that plays a role in cadiovascular homeostasis. Functions as a balanced agonist activating both G(i) protein pathway and beta-arrestin pathway of APLNR. Downstream G proteins activation, apelin can inhibit cAMP production and activate key intracellular effectors such as ERKs. On the other hand, APLNR activation induces beta-arrestin recruitment to the membrane leading to desensitization and internalization of the receptor. Apelin blunts cardiac hypertrophic induction from APLNR on response to pathological stimuli, but also induces myocardial hypertrophy under normal conditions. Apelin-36 dissociates more hardly than (pyroglu)apelin-13 from APLNR. Involved in the regulation of cardiac precursor cell movements during gastrulation and heart morphogenesis. Has an inhibitory effect on cytokine production in response to T-cell receptor/CD3 cross-linking; the oral intake of apelin in the colostrum and the milk might therefore modulate immune responses in neonates. Plays a role in early coronary blood vessels formation. Mediates myocardial contractility in an ERK1/2-dependent manner. May also have a role in the central control of body fluid homeostasis by influencing vasopressin release and drinking behavior. Functionally, (Microbial infection) Endogenous ligand for the apelin receptor (APLNR), an alternative coreceptor with CD4 for HIV-1 infection. Inhibits HIV-1 entry in cells coexpressing CD4 and APLNR. Apelin-36 has a greater inhibitory activity on HIV infection than other synthetic apelin derivatives. This is Apelin from Homo sapiens (Human).